The primary structure comprises 353 residues: UDP-N-acetylglucosamine--N-acetylmuramyl-(pentapeptide) pyrophosphoryl-undecaprenol N-acetylglucosamine transferase (353 aa).

UDP-N-acetyl-alpha-D-glucosamine is bound by residues 10-12, asparagine 124, serine 183, and glutamine 283; that span reads TGG.

It belongs to the glycosyltransferase 28 family. MurG subfamily.

The protein localises to the cell inner membrane. The enzyme catalyses di-trans,octa-cis-undecaprenyl diphospho-N-acetyl-alpha-D-muramoyl-L-alanyl-D-glutamyl-meso-2,6-diaminopimeloyl-D-alanyl-D-alanine + UDP-N-acetyl-alpha-D-glucosamine = di-trans,octa-cis-undecaprenyl diphospho-[N-acetyl-alpha-D-glucosaminyl-(1-&gt;4)]-N-acetyl-alpha-D-muramoyl-L-alanyl-D-glutamyl-meso-2,6-diaminopimeloyl-D-alanyl-D-alanine + UDP + H(+). The protein operates within cell wall biogenesis; peptidoglycan biosynthesis. Functionally, cell wall formation. Catalyzes the transfer of a GlcNAc subunit on undecaprenyl-pyrophosphoryl-MurNAc-pentapeptide (lipid intermediate I) to form undecaprenyl-pyrophosphoryl-MurNAc-(pentapeptide)GlcNAc (lipid intermediate II). This is UDP-N-acetylglucosamine--N-acetylmuramyl-(pentapeptide) pyrophosphoryl-undecaprenol N-acetylglucosamine transferase from Helicobacter pylori (strain ATCC 700392 / 26695) (Campylobacter pylori).